The chain runs to 499 residues: Lysine--tRNA ligase (499 aa).

Residues glutamate 409 and glutamate 416 each coordinate Mg(2+).

Belongs to the class-II aminoacyl-tRNA synthetase family. In terms of assembly, homodimer. Requires Mg(2+) as cofactor.

The protein resides in the cytoplasm. The catalysed reaction is tRNA(Lys) + L-lysine + ATP = L-lysyl-tRNA(Lys) + AMP + diphosphate. This chain is Lysine--tRNA ligase, found in Pseudomonas fluorescens (strain Pf0-1).